Here is a 1114-residue protein sequence, read N- to C-terminus: WD repeat-containing protein 72 (1114 aa).

7 WD repeats span residues 15 to 54 (APPHSITAIMITDDQQTIVTGSQEGQLCLWSLSPELKISA), 60 to 102 (GHSA…CVEK), 160 to 197 (KCMCIVHSVRIQEDSLLVVSITGELKVWDLSSSINSIQ), 327 to 373 (EENK…SKFD), 413 to 452 (GMTATITSSEYIPNLDKLICGCEDGTIFITKALNAAKAGL), 470 to 515 (GHHQ…ILHT), and 566 to 605 (KHLFPVRMIRWHPVENFLIVGCTDDSVYIWEIETGTLERH). Disordered regions lie at residues 634–658 (SETHKHKSIEQKSSNSHQPGPVPCP) and 749–798 (SLQT…PPRK). Basic residues predominate over residues 780–796 (KRQKKMKSSKKAHPKPP). Phosphoserine occurs at positions 1093 and 1095.

Expressed in maturation stage ameloblasts (at protein level).

The protein localises to the cytoplasmic vesicle. Its function is as follows. Plays a major role in formation of tooth enamel. Specifically required during the maturation phase of amelogenesis for normal formation of the enamel matrix and clearance of enamel proteins. May be involved in localization of the calcium transporter SLC24A4 to the ameloblast cell membrane. This chain is WD repeat-containing protein 72, found in Mus musculus (Mouse).